The primary structure comprises 420 residues: Gamma-glutamyl phosphate reductase (420 aa).

Belongs to the gamma-glutamyl phosphate reductase family.

It localises to the cytoplasm. It catalyses the reaction L-glutamate 5-semialdehyde + phosphate + NADP(+) = L-glutamyl 5-phosphate + NADPH + H(+). It participates in amino-acid biosynthesis; L-proline biosynthesis; L-glutamate 5-semialdehyde from L-glutamate: step 2/2. Its function is as follows. Catalyzes the NADPH-dependent reduction of L-glutamate 5-phosphate into L-glutamate 5-semialdehyde and phosphate. The product spontaneously undergoes cyclization to form 1-pyrroline-5-carboxylate. The protein is Gamma-glutamyl phosphate reductase of Shewanella amazonensis (strain ATCC BAA-1098 / SB2B).